The following is a 455-amino-acid chain: Beta-1,4-mannosyltransferase bre-3 (455 aa).

The protein belongs to the glycosyltransferase 2 family.

Its subcellular location is the cytoplasm. It functions in the pathway protein modification; protein glycosylation. Glycosyltransferase with a proposed role in glycosphingolipid biosynthesis. Involved in susceptibility to pore-forming crystal toxins in conjunction with bre-1, bre-2 and bre-4. Involved in resistance to the nematotoxic C.cinerea galectin Cgl2. Has a role in determining brood size. The sequence is that of Beta-1,4-mannosyltransferase bre-3 from Caenorhabditis briggsae.